The following is a 652-amino-acid chain: Pesticidal crystal protein Cry3Bb (652 aa).

Over residues 1-12 the composition is skewed to basic and acidic residues; it reads MNPNNRSEHDTI. 2 disordered regions span residues 1–33 and 433–465; these read MNPN…ADNP and KNET…ETTD. Over residues 14 to 33 the composition is skewed to polar residues; the sequence is VTPNSELQTNHNQYPLADNP.

The protein belongs to the delta endotoxin family. As to quaternary structure, monomer.

Promotes colloidosmotic lysis by binding to the midgut epithelial cells of Coleoptera. Has moderate level of toxicity to southern corn rootworm. The protein is Pesticidal crystal protein Cry3Bb (cry3Bb) of Bacillus thuringiensis.